A 196-amino-acid polypeptide reads, in one-letter code: Metalloproteinase inhibitor 2 (196 aa).

The first 2 residues, 1-2 (RA), serve as a signal peptide directing secretion. A Zn(2+)-binding site is contributed by cysteine 3. Involved in metalloproteinase-binding regions lie at residues 3-6 (CSCS) and 71-72 (SA). Intrachain disulfides connect cysteine 3–cysteine 74, cysteine 5–cysteine 103, cysteine 15–cysteine 128, cysteine 130–cysteine 177, cysteine 135–cysteine 140, and cysteine 148–cysteine 169. The NTR domain maps to 3–128 (CSCSPVHPQQ…SLNHRYQMGC (126 aa)).

This sequence belongs to the protease inhibitor I35 (TIMP) family. In terms of assembly, interacts (via the C-terminal) with MMP2 (via the C-terminal PEX domain); the interaction inhibits the MMP2 activity. Post-translationally, the activity of TIMP2 is dependent on the presence of disulfide bonds.

It is found in the secreted. In terms of biological role, complexes with metalloproteinases (such as collagenases) and irreversibly inactivates them by binding to their catalytic zinc cofactor. This is Metalloproteinase inhibitor 2 (TIMP2) from Cricetulus longicaudatus (Long-tailed dwarf hamster).